Reading from the N-terminus, the 342-residue chain is Leucine-rich repeat-containing protein 23 (342 aa).

Over residues 1–30 (MSDEDDLEDFETDQDDLEREDDEKETEEWE) the composition is skewed to acidic residues. Residues 1–42 (MSDEDDLEDFETDQDDLEREDDEKETEEWEDYRKEGEESEDW) form a disordered region. The stretch at 3–27 (DEDDLEDFETDQDDLEREDDEKETE) forms a coiled coil. LRR repeat units follow at residues 91–112 (HLRY…NHLT), 113–133 (NLLW…NELP), 134–154 (YLQI…ISHP), 155–176 (RLAS…DPQK), 179–199 (SLHT…INLP), 200–221 (KLKN…ENLS), 222–243 (NLTT…SKEM), and 245–266 (SLQY…AKLR). The interaction with RSPH9 stretch occupies residues 207–342 (AQNMLKKVEG…PESELDQSST (136 aa)). In terms of domain architecture, LRRCT spans 279 to 317 (NPCTDENDYRQEALVQIAHLERLDKEFYEEEERAEADEI). Residues 306–332 (YEEEERAEADEIRQRMKEEQEQEAEVE) adopt a coiled-coil conformation. Residues 307–342 (EEEERAEADEIRQRMKEEQEQEAEVEPESELDQSST) are disordered. Positions 314–324 (ADEIRQRMKEE) are enriched in basic and acidic residues. Residues 325–342 (QEQEAEVEPESELDQSST) show a composition bias toward acidic residues.

Component of the axonemal radial spoke complex. Interacts with RSPH3. Interacts with RSPH9.

The protein localises to the cytoplasm. Its subcellular location is the cytoskeleton. The protein resides in the flagellum axoneme. In terms of biological role, essential for sperm motility and male fertility. Plays an important role in the proper assembly of the third radial spoke (RS3) head and the bridge structure between RS2 and RS3 in the sperm flagella. This chain is Leucine-rich repeat-containing protein 23 (LRRC23), found in Bos taurus (Bovine).